The primary structure comprises 160 residues: MTKKKAHKPGSATIALNKRARHEYFIEEEFEAGLALQGWEVKSLRAGKANISDSYVLLRDGEAFLFGANITPMAVASTHVVCDPTRTRKLLLNQRELDSLYGRVNREGYTVVALSLYWKNAWCKVKIGVAKGKKQHDKRSDIKEREWQVDKARIMKNSHR.

This sequence belongs to the SmpB family.

Its subcellular location is the cytoplasm. Its function is as follows. Required for rescue of stalled ribosomes mediated by trans-translation. Binds to transfer-messenger RNA (tmRNA), required for stable association of tmRNA with ribosomes. tmRNA and SmpB together mimic tRNA shape, replacing the anticodon stem-loop with SmpB. tmRNA is encoded by the ssrA gene; the 2 termini fold to resemble tRNA(Ala) and it encodes a 'tag peptide', a short internal open reading frame. During trans-translation Ala-aminoacylated tmRNA acts like a tRNA, entering the A-site of stalled ribosomes, displacing the stalled mRNA. The ribosome then switches to translate the ORF on the tmRNA; the nascent peptide is terminated with the 'tag peptide' encoded by the tmRNA and targeted for degradation. The ribosome is freed to recommence translation, which seems to be the essential function of trans-translation. This Escherichia coli O6:K15:H31 (strain 536 / UPEC) protein is SsrA-binding protein.